The chain runs to 498 residues: Putative BTB/POZ domain-containing protein L788 (498 aa).

Positions 28 to 99 (TDIILVLEDD…FYGQKIKSGN (72 aa)) constitute a BTB domain.

Belongs to the mimivirus BTB/WD family.

This Acanthamoeba polyphaga (Amoeba) protein is Putative BTB/POZ domain-containing protein L788.